We begin with the raw amino-acid sequence, 288 residues long: Prohibitin-1, mitochondrial (288 aa).

Over 1 to 10 the chain is Mitochondrial matrix; the sequence is MNNVKVPKIP. Residues 11-30 traverse the membrane as a helical; Signal-anchor for type II membrane protein segment; that stretch reads GGGAISTLLKVGIIGGLGLY. Over 31 to 288 the chain is Mitochondrial intermembrane; that stretch reads GATHSLYNVE…GMNLDVDAKN (258 aa). The stretch at 186-219 forms a coiled coil; the sequence is KEFTAAIEAKQVAAQEAERAKFIVEKAEQDKRSA.

This sequence belongs to the prohibitin family. Component of a prohibitin multimeric complex in mitochondrial membranes. As to expression, mostly expressed in proliferative tissues, including vasculature, shoot and root apical tissues.

The protein localises to the mitochondrion inner membrane. Functionally, prohibitin probably acts as a holdase/unfoldase for the stabilization of newly synthesized mitochondrial proteins. This is Prohibitin-1, mitochondrial (PHB1) from Arabidopsis thaliana (Mouse-ear cress).